We begin with the raw amino-acid sequence, 340 residues long: MVKQITDKLGRPIRDLRLSVTDRCNFRCDYCMPKEIFGDDFVFLPKDELLSFSEMERIARVYTHLGVKKIRITGGEPLMRRDLYKLIAALNEIEGVEDIGLTTNGLLLKKHGQKLYDAGLRRINVSLDAIDNELFQSINNRNIKADTILEQIDYAVSIGFKVKINVVVQKGVNDDQIIPMVQYFKDKNIQVRFIEFMDVGNDNGWDFSKVVSKDEMLSMIQEEFDIEAVEPKYYGEVAKYYRHKDNGAQFGLITSVSQSFCSTCTRARLSSDGKFYGCLFSTVDGFNVKEFMRSGVSDDELQAKFEELWNIRDDRYSDERTEQTVAIRKRKKINMNYIGG.

One can recognise a Radical SAM core domain in the interval 8–227; the sequence is KLGRPIRDLR…SMIQEEFDIE (220 aa). Arg-17 contacts GTP. Residues Cys-24 and Cys-28 each coordinate [4Fe-4S] cluster. Position 30 (Tyr-30) interacts with S-adenosyl-L-methionine. Cys-31 is a binding site for [4Fe-4S] cluster. Residue Arg-71 coordinates GTP. Gly-75 is an S-adenosyl-L-methionine binding site. Position 102 (Thr-102) interacts with GTP. Ser-126 is an S-adenosyl-L-methionine binding site. Lys-163 contacts GTP. Met-197 serves as a coordination point for S-adenosyl-L-methionine. Positions 261 and 264 each coordinate [4Fe-4S] cluster. Position 266–268 (266–268) interacts with GTP; sequence RAR. Position 278 (Cys-278) interacts with [4Fe-4S] cluster.

It belongs to the radical SAM superfamily. MoaA family. As to quaternary structure, monomer and homodimer. The cofactor is [4Fe-4S] cluster.

It carries out the reaction GTP + AH2 + S-adenosyl-L-methionine = (8S)-3',8-cyclo-7,8-dihydroguanosine 5'-triphosphate + 5'-deoxyadenosine + L-methionine + A + H(+). It participates in cofactor biosynthesis; molybdopterin biosynthesis. Catalyzes the cyclization of GTP to (8S)-3',8-cyclo-7,8-dihydroguanosine 5'-triphosphate. The chain is GTP 3',8-cyclase from Staphylococcus carnosus (strain TM300).